A 702-amino-acid chain; its full sequence is Ribosomal RNA large subunit methyltransferase K/L (702 aa).

The region spanning 43–154 (LIYQSLMWSR…KETASIALDL (112 aa)) is the THUMP domain.

It belongs to the methyltransferase superfamily. RlmKL family.

It is found in the cytoplasm. The catalysed reaction is guanosine(2445) in 23S rRNA + S-adenosyl-L-methionine = N(2)-methylguanosine(2445) in 23S rRNA + S-adenosyl-L-homocysteine + H(+). The enzyme catalyses guanosine(2069) in 23S rRNA + S-adenosyl-L-methionine = N(2)-methylguanosine(2069) in 23S rRNA + S-adenosyl-L-homocysteine + H(+). Its function is as follows. Specifically methylates the guanine in position 2445 (m2G2445) and the guanine in position 2069 (m7G2069) of 23S rRNA. This is Ribosomal RNA large subunit methyltransferase K/L from Salmonella schwarzengrund (strain CVM19633).